Consider the following 245-residue polypeptide: Triosephosphate isomerase (245 aa).

A substrate-binding site is contributed by 9 to 11 (NWK). Catalysis depends on histidine 92, which acts as the Electrophile. Glutamate 164 (proton acceptor) is an active-site residue. Substrate is bound by residues glycine 170, serine 209, and 230–231 (GG).

It belongs to the triosephosphate isomerase family. As to quaternary structure, homodimer.

The protein resides in the cytoplasm. The enzyme catalyses D-glyceraldehyde 3-phosphate = dihydroxyacetone phosphate. It functions in the pathway carbohydrate biosynthesis; gluconeogenesis. It participates in carbohydrate degradation; glycolysis; D-glyceraldehyde 3-phosphate from glycerone phosphate: step 1/1. In terms of biological role, involved in the gluconeogenesis. Catalyzes stereospecifically the conversion of dihydroxyacetone phosphate (DHAP) to D-glyceraldehyde-3-phosphate (G3P). The polypeptide is Triosephosphate isomerase (Cupriavidus pinatubonensis (strain JMP 134 / LMG 1197) (Cupriavidus necator (strain JMP 134))).